Here is a 145-residue protein sequence, read N- to C-terminus: Flagellar assembly factor FliW (145 aa).

Belongs to the FliW family. In terms of assembly, interacts with translational regulator CsrA and flagellin(s).

It is found in the cytoplasm. Its function is as follows. Acts as an anti-CsrA protein, binds CsrA and prevents it from repressing translation of its target genes, one of which is flagellin. Binds to flagellin and participates in the assembly of the flagellum. In Anoxybacillus flavithermus (strain DSM 21510 / WK1), this protein is Flagellar assembly factor FliW.